The sequence spans 540 residues: Amino acid transporter AVT1B (540 aa).

A compositionally biased stretch (polar residues) spans 1–11 (MNHSTSDQSLY). The interval 1 to 55 (MNHSTSDQSLYIESDDGDDERKHLSDDEDDDGTLSDTSDAYNQNQHHLSKASPYS) is disordered. Transmembrane regions (helical) follow at residues 155–175 (AVLN…PYAV), 180–200 (WLGL…GLLL), 227–247 (ILVS…YIIL), 273–293 (LFAL…DLSV), 297–317 (ISAG…WVGL), 332–352 (LATL…HGVF), 367–387 (AVLL…AVMG), 412–432 (IALW…LSPV), 452–474 (IAIR…FFGL), 478–500 (LIGS…LSIL), and 511–531 (ICIL…YSAL).

This sequence belongs to the amino acid/polyamine transporter 2 family. Amino acid/auxin permease (AAAP) (TC 2.A.18.5) subfamily.

The protein resides in the membrane. The chain is Amino acid transporter AVT1B from Arabidopsis thaliana (Mouse-ear cress).